The following is a 280-amino-acid chain: Formamidopyrimidine-DNA glycosylase (280 aa).

P2 functions as the Schiff-base intermediate with DNA in the catalytic mechanism. Catalysis depends on E3, which acts as the Proton donor. K53 functions as the Proton donor; for beta-elimination activity in the catalytic mechanism. The DNA site is built by H91, R110, and R152. Residues 239 to 273 (HVYGRAGQPCDRCGTPIEKIVLGQRGTHFCPVCQP) form an FPG-type zinc finger. R263 serves as the catalytic Proton donor; for delta-elimination activity.

It belongs to the FPG family. In terms of assembly, monomer. Zn(2+) serves as cofactor.

The catalysed reaction is Hydrolysis of DNA containing ring-opened 7-methylguanine residues, releasing 2,6-diamino-4-hydroxy-5-(N-methyl)formamidopyrimidine.. It carries out the reaction 2'-deoxyribonucleotide-(2'-deoxyribose 5'-phosphate)-2'-deoxyribonucleotide-DNA = a 3'-end 2'-deoxyribonucleotide-(2,3-dehydro-2,3-deoxyribose 5'-phosphate)-DNA + a 5'-end 5'-phospho-2'-deoxyribonucleoside-DNA + H(+). In terms of biological role, involved in base excision repair of DNA damaged by oxidation or by mutagenic agents. Acts as a DNA glycosylase that recognizes and removes damaged bases. Has a preference for oxidized purines, such as 7,8-dihydro-8-oxoguanine (8-oxoG). Has AP (apurinic/apyrimidinic) lyase activity and introduces nicks in the DNA strand. Cleaves the DNA backbone by beta-delta elimination to generate a single-strand break at the site of the removed base with both 3'- and 5'-phosphates. This chain is Formamidopyrimidine-DNA glycosylase (mutM), found in Deinococcus radiodurans (strain ATCC 13939 / DSM 20539 / JCM 16871 / CCUG 27074 / LMG 4051 / NBRC 15346 / NCIMB 9279 / VKM B-1422 / R1).